Reading from the N-terminus, the 769-residue chain is CO(2)-response secreted protease (769 aa).

The signal sequence occupies residues 1–27 (MKGITFFTPFLSFLYLLCILFMTETEA). The 74-residue stretch at 35–108 (VYIVYMGSAS…VFPDPHFQLH (74 aa)) folds into the Inhibitor I9 domain. Positions 112–613 (SWDFLKYQTS…AGELSSTASM (502 aa)) constitute a Peptidase S8 domain. Residues aspartate 145 and histidine 210 each act as charge relay system in the active site. Residues 381–465 (ADASEGSARA…SKEAAEIFSY (85 aa)) enclose the PA domain. Serine 546 serves as the catalytic Charge relay system.

Belongs to the peptidase S8 family. As to expression, expressed in roots, guard cells and meristemoid and pavement cells.

It is found in the secreted. The protein resides in the cell wall. It carries out the reaction Release of an N-terminal tripeptide from a polypeptide.. Its function is as follows. Mediates CO(2)-controlled stomatal development by cleaving peptide EPF2 (AC Q8LC53). Not active on peptides EPF1 (AC Q8S8I4) or stomagen (AC Q9SV72). This chain is CO(2)-response secreted protease, found in Arabidopsis thaliana (Mouse-ear cress).